A 109-amino-acid chain; its full sequence is Thiosulfate sulfurtransferase GlpE (109 aa).

In terms of domain architecture, Rhodanese spans 17–105 (KEGKTALVDI…WARSYPQDIT (89 aa)). The Cysteine persulfide intermediate role is filled by Cys-65.

The protein belongs to the GlpE family.

The protein localises to the cytoplasm. The enzyme catalyses thiosulfate + hydrogen cyanide = thiocyanate + sulfite + 2 H(+). The catalysed reaction is thiosulfate + [thioredoxin]-dithiol = [thioredoxin]-disulfide + hydrogen sulfide + sulfite + 2 H(+). Functionally, transferase that catalyzes the transfer of sulfur from thiosulfate to thiophilic acceptors such as cyanide or dithiols. May function in a CysM-independent thiosulfate assimilation pathway by catalyzing the conversion of thiosulfate to sulfite, which can then be used for L-cysteine biosynthesis. The chain is Thiosulfate sulfurtransferase GlpE from Yersinia pestis.